We begin with the raw amino-acid sequence, 553 residues long: RNA N(6)-adenosine-methyltransferase METTL16 (553 aa).

Residues 17–20 (PPDF) are RNA-binding. S-adenosyl-L-methionine-binding residues include Arg82, Gly110, Ser114, Glu133, Thr164, and Asn184. The segment at 163 to 167 (KTLLM) is K-loop. RNA-binding regions lie at residues 199–211 (SRNSRRPPPSSVN), 250–254 (GKKCS), and 277–283 (QGRTMRW). The segment at 289–400 (FYDDVTVPSP…QLREVPRAPE (112 aa)) is VCR 1. 3 positions are modified to phosphoserine: Ser329, Ser425, and Ser429. Residues 457-496 (EETPEATEDERDEERGGMEAMESCKGSSNGAQDGEASEKG) form a disordered region. Residues 458–468 (ETPEATEDERD) show a composition bias toward acidic residues. A Phosphothreonine modification is found at Thr463. Positions 506–553 (YLFKCLVNIKKEAGDAVVEMHWVEGQNRDLMNQLCTYVRNQILRLVAS) are VCR 2.

The protein belongs to the methyltransferase superfamily. METTL16/RlmF family. Interacts with MEPCE. Interacts with LARP7.

The protein resides in the nucleus. It is found in the cytoplasm. It carries out the reaction adenosine in U6 snRNA + S-adenosyl-L-methionine = N(6)-methyladenosine in U6 snRNA + S-adenosyl-L-homocysteine + H(+). The enzyme catalyses an adenosine in mRNA + S-adenosyl-L-methionine = an N(6)-methyladenosine in mRNA + S-adenosyl-L-homocysteine + H(+). Its activity is regulated as follows. Methyltransferase activity is autoinhibited by the K-loop region that blocks S-adenosyl-L-methionine-binding. Upon activation, K-loop changes conformation, allowing S-adenosyl-L-methionine-binding and subsequent methyltransferase activity. mRNA N6-adenosine-methyltransferase activity is inhibited by zinc. Its function is as follows. RNA N6-methyltransferase that methylates adenosine residues at the N(6) position of a subset of RNAs and is involved in S-adenosyl-L-methionine homeostasis by regulating expression of MAT2A transcripts. Able to N6-methylate a subset of mRNAs and U6 small nuclear RNAs (U6 snRNAs). In contrast to the METTL3-METTL14 heterodimer, only able to methylate a limited number of RNAs: requires both a 5'UACAGAGAA-3' nonamer sequence and a specific RNA structure. Plays a key role in S-adenosyl-L-methionine homeostasis by mediating N6-methylation of MAT2A mRNAs, altering splicing of MAT2A transcripts: in presence of S-adenosyl-L-methionine, binds the 3'-UTR region of MAT2A mRNA and specifically N6-methylates the first hairpin of MAT2A mRNA, preventing recognition of their 3'-splice site by U2AF1/U2AF35, thereby inhibiting splicing and protein production of S-adenosylmethionine synthase. In S-adenosyl-L-methionine-limiting conditions, binds the 3'-UTR region of MAT2A mRNA but stalls due to the lack of a methyl donor, preventing N6-methylation and promoting expression of MAT2A. In addition to mRNAs, also able to mediate N6-methylation of U6 small nuclear RNA (U6 snRNA): specifically N6-methylates adenine in position 43 of U6 snRNAs. Also able to bind various lncRNAs, such as 7SK snRNA (7SK RNA) or 7SL RNA. Specifically binds the 3'-end of the MALAT1 long non-coding RNA. The protein is RNA N(6)-adenosine-methyltransferase METTL16 of Mus musculus (Mouse).